A 530-amino-acid chain; its full sequence is Cilia- and flagella-associated protein 97 (530 aa).

S19 carries the post-translational modification Phosphoserine. Disordered regions lie at residues 29-83 (TNSV…PVEN) and 116-258 (IPNR…LSTP). A compositionally biased stretch (basic and acidic residues) spans 35–49 (KQNDDPKERIDKDTK). Residues 50–63 (NVNSNTGMQTTENY) are compositionally biased toward polar residues. Residues 67 to 82 (KGNERNVKFPPEHPVE) show a composition bias toward basic and acidic residues. The segment covering 129–139 (GDYYTDGEESS) has biased composition (acidic residues). T133 carries the post-translational modification Phosphothreonine. S138 and S139 each carry phosphoserine. Over residues 170 to 203 (SSSSSSSLSSSSSGSGTDCLDGGSDSHLSDSSPS) the composition is skewed to low complexity. Residue S215 is modified to Phosphoserine. Positions 227 to 236 (TETQPSSTTP) are enriched in polar residues. Residues S245 and S327 each carry the phosphoserine modification. Residues 372 to 447 (KNYSFTREEV…ALLKRLEAVK (76 aa)) adopt a coiled-coil conformation. Disordered stretches follow at residues 395-417 (LSRQ…HPPK) and 483-530 (QYSP…TAWL). Over residues 491–501 (SRTSSATSGLS) the composition is skewed to polar residues.

This sequence belongs to the CFAP97 family.

The polypeptide is Cilia- and flagella-associated protein 97 (Pongo abelii (Sumatran orangutan)).